The sequence spans 137 residues: MLQPKRTKFRKQQKLRNRGLAYRGNKVSFGEFGLQATSRGRITARQIEAGRRAISRHIKRGGKIWIRIFPDKPITQKPLEVRMGKGKGSVEYWVAQIQPGRVLYEITGVKEELAREAFARAAAKMPVQTTFVEKQVM.

The protein belongs to the universal ribosomal protein uL16 family. As to quaternary structure, part of the 50S ribosomal subunit.

In terms of biological role, binds 23S rRNA and is also seen to make contacts with the A and possibly P site tRNAs. This is Large ribosomal subunit protein uL16 from Francisella tularensis subsp. holarctica (strain FTNF002-00 / FTA).